A 491-amino-acid polypeptide reads, in one-letter code: Sucrose transport protein SUC7 (491 aa).

Residues methionine 1–valine 13 show a composition bias toward basic and acidic residues. The interval methionine 1 to glycine 25 is disordered. The Cytoplasmic portion of the chain corresponds to methionine 1–methionine 32. Phosphoserine is present on serine 17. A helical transmembrane segment spans residues isoleucine 33 to leucine 53. Over threonine 54–proline 67 the chain is Extracellular. Residues serine 68 to phenylalanine 88 traverse the membrane as a helical segment. The Cytoplasmic portion of the chain corresponds to serine 89 to arginine 100. The chain crosses the membrane as a helical span at residues proline 101–alanine 121. At aspartate 122–arginine 138 the chain is on the extracellular side. The helical transmembrane segment at alanine 139–glycine 159 threads the bilayer. At proline 160 to asparagine 180 the chain is on the cytoplasmic side. Residues alanine 181–threonine 201 traverse the membrane as a helical segment. At asparagine 202–lysine 223 the chain is on the extracellular side. Residues serine 224 to valine 244 traverse the membrane as a helical segment. Over glutamate 245–proline 276 the chain is Cytoplasmic. Residues methionine 277–tyrosine 297 traverse the membrane as a helical segment. The Extracellular segment spans residues aspartate 298–glutamine 323. Residues glycine 324–leucine 344 form a helical membrane-spanning segment. The Cytoplasmic segment spans residues glycine 345–arginine 358. A helical transmembrane segment spans residues leucine 359–lysine 379. The Extracellular segment spans residues lysine 380–alanine 402. A helical membrane pass occupies residues leucine 403–leucine 423. Over alanine 424 to asparagine 443 the chain is Cytoplasmic. A helical membrane pass occupies residues methionine 444–phenylalanine 464. Over glycine 465–asparagine 468 the chain is Extracellular. Residues leucine 469–valine 489 form a helical membrane-spanning segment. The Cytoplasmic segment spans residues leucine 490–proline 491.

Belongs to the glycoside-pentoside-hexuronide (GPH) cation symporter transporter (TC 2.A.2.4) family. Expressed in anthers.

It is found in the cell membrane. The protein operates within glycan biosynthesis; sucrose metabolism. Its function is as follows. May be responsible for the transport of glucosides into the cell, with the concomitant uptake of protons (symport system). Does not seem to transport sucrose. This is Sucrose transport protein SUC7 from Arabidopsis thaliana (Mouse-ear cress).